Reading from the N-terminus, the 216-residue chain is Imidazoleglycerol-phosphate dehydratase (216 aa).

S211 is subject to Phosphoserine.

The protein belongs to the imidazoleglycerol-phosphate dehydratase family.

It carries out the reaction D-erythro-1-(imidazol-4-yl)glycerol 3-phosphate = 3-(imidazol-4-yl)-2-oxopropyl phosphate + H2O. It participates in amino-acid biosynthesis; L-histidine biosynthesis; L-histidine from 5-phospho-alpha-D-ribose 1-diphosphate: step 6/9. The polypeptide is Imidazoleglycerol-phosphate dehydratase (his5) (Schizosaccharomyces pombe (strain 972 / ATCC 24843) (Fission yeast)).